Reading from the N-terminus, the 532-residue chain is MGKKVAIIGAGVSGLASIRSCLEEGLEPTCFEKSNDIGGLWKFSDHAEEGRASIYKSVFSNSSKEMMCFPDFPFPDDFPNFMHNSKIQEYIIAFAKEKNLLKYIQFKTFVSSVNKHPDFATTGQWDVTTERDGKKESAVFDAVMVCSGHHVYPNLPKESFPGLNHFKGKCFHSRDYKEPGVFNGKRVLVVGLGNSGCDIATELSRTAEQVMISSRSGSWVMSRVWDNGYPWDMLLVTRFGTFLKNNLPTAISDWLYVKQMNARFKHENYGLMPLNGVLRKEPVFNDELPASILCGIVSVKPNVKEFTETSAIFEDGTIFEGIDCVIFATGYSFAYPFLDESIIKSRNNEIILFKGVFPPLLEKSTIAVIGFVQSLGAAIPTVDLQSRWAAQVIKGTCTLPSMEDMMNDINEKMEKKRKWFGKSETIQTDYIVYMDELSSFIGAKPNIPWLFLTDPKLAMEVYFGPCSPYQFRLVGPGQWPGARNAILTQWDRSLKPMQTRVVGRLQKPCFFFHWLKLFAIPILLIAVFLVLT.

FAD-binding positions include 9 to 13 (GAGVS), Glu-32, 40 to 41 (LW), and 61 to 62 (NS). NADP(+) contacts are provided by residues 60 to 61 (SN) and 195 to 198 (SGCD). Phosphoserine is present on Ser-401. Residues 510–530 (FFFHWLKLFAIPILLIAVFLV) traverse the membrane as a helical segment.

The protein belongs to the FMO family. FAD is required as a cofactor. In terms of tissue distribution, liver.

Its subcellular location is the microsome membrane. The protein localises to the endoplasmic reticulum membrane. The catalysed reaction is trimethylamine + NADPH + O2 = trimethylamine N-oxide + NADP(+) + H2O. It carries out the reaction N,N-dimethylaniline + NADPH + O2 + H(+) = N,N-dimethylaniline N-oxide + NADP(+) + H2O. It catalyses the reaction hypotaurine + NADPH + O2 + H(+) = taurine + NADP(+) + H2O. The enzyme catalyses (S)-nicotine + NADPH + O2 = trans-(S)-nicotine N(1')-oxide + NADP(+) + H2O. The catalysed reaction is albendazole + NADPH + O2 + H(+) = albendazole S-oxide + NADP(+) + H2O. Essential hepatic enzyme that catalyzes the oxygenation of a wide variety of nitrogen- and sulfur-containing compounds including drugs as well as dietary compounds. Plays an important role in the metabolism of trimethylamine (TMA), via the production of trimethylamine N-oxide (TMAO) metabolite. TMA is generated by the action of gut microbiota using dietary precursors such as choline, choline containing compounds, betaine or L-carnitine. By regulating TMAO concentration, FMO3 directly impacts both platelet responsiveness and rate of thrombus formation. The protein is Flavin-containing monooxygenase 3 (FMO3) of Homo sapiens (Human).